The following is a 304-amino-acid chain: MQQADLIKRIQELKVKRNAVILSHYYSRPEVQDIADFVGDSLALSQEAVRQDADVIVFCGVHFMGESAAILSPKKTVLLPEIDSTCPMADMVDVEGLKRLKEKHPEAPVVSYVNSSAAIKAESYICCTSANAVEVVNSLDVDEVIFVPDKNLAAYVASRTDKKIIPWEGHCPTHHQILREDVLKMKEKHPLAKFIAHPECRPDVLELADHVASTRGMIMYAKNSPAREFIIGTECGLIHGLHKAAPEKTYYCISEFACCPSMKMVNLEKLLASLEKMQHVVTVPEEVRVRAKEALDRMLAVKVK.

2 residues coordinate iminosuccinate: His-24 and Ser-41. Cys-86 is a binding site for [4Fe-4S] cluster. Iminosuccinate is bound by residues 112–114 (YVN) and Ser-129. Cys-171 is a binding site for [4Fe-4S] cluster. Iminosuccinate-binding positions include 197 to 199 (HPE) and Thr-214. Residue Cys-259 coordinates [4Fe-4S] cluster.

Belongs to the quinolinate synthase family. Type 2 subfamily. [4Fe-4S] cluster serves as cofactor.

The protein localises to the cytoplasm. It carries out the reaction iminosuccinate + dihydroxyacetone phosphate = quinolinate + phosphate + 2 H2O + H(+). The protein operates within cofactor biosynthesis; NAD(+) biosynthesis; quinolinate from iminoaspartate: step 1/1. Functionally, catalyzes the condensation of iminoaspartate with dihydroxyacetone phosphate to form quinolinate. This is Quinolinate synthase 1 from Methanosarcina acetivorans (strain ATCC 35395 / DSM 2834 / JCM 12185 / C2A).